A 740-amino-acid polypeptide reads, in one-letter code: Isocitrate dehydrogenase [NADP] 2 (740 aa).

NADP(+) is bound by residues N83 and S85. Residues S130, N133, R137, R143, and K253 each contribute to the D-threo-isocitrate site. NADP(+) is bound at residue N133. D348 is a binding site for Mg(2+). Y418 and R546 together coordinate D-threo-isocitrate. Residues D547 and D551 each coordinate Mg(2+). NADP(+)-binding residues include S584, H588, R599, D601, and R648.

It belongs to the monomeric-type IDH family. In terms of assembly, monomer. It depends on Mg(2+) as a cofactor. Mn(2+) serves as cofactor.

The catalysed reaction is D-threo-isocitrate + NADP(+) = 2-oxoglutarate + CO2 + NADPH. With respect to regulation, IDH activity is not significantly affected by monovalent cations. The combined addition of Mn(2+) and another divalent cation results in the decrease of the activity. Its function is as follows. Catalyzes the oxidative decarboxylation of isocitrate to 2-oxoglutarate and carbon dioxide with the concomitant reduction of NADP(+). Cannot use NAD(+). The chain is Isocitrate dehydrogenase [NADP] 2 from Psychrobacter sp. (strain 13A).